The primary structure comprises 254 residues: Phosphoribosylaminoimidazole-succinocarboxamide synthase 1 (254 aa).

This sequence belongs to the SAICAR synthetase family.

The catalysed reaction is 5-amino-1-(5-phospho-D-ribosyl)imidazole-4-carboxylate + L-aspartate + ATP = (2S)-2-[5-amino-1-(5-phospho-beta-D-ribosyl)imidazole-4-carboxamido]succinate + ADP + phosphate + 2 H(+). It participates in purine metabolism; IMP biosynthesis via de novo pathway; 5-amino-1-(5-phospho-D-ribosyl)imidazole-4-carboxamide from 5-amino-1-(5-phospho-D-ribosyl)imidazole-4-carboxylate: step 1/2. The chain is Phosphoribosylaminoimidazole-succinocarboxamide synthase 1 (purC1) from Agrobacterium fabrum (strain C58 / ATCC 33970) (Agrobacterium tumefaciens (strain C58)).